The sequence spans 268 residues: Interleukin-1 alpha (268 aa).

A propeptide spanning residues 1–112 is cleaved from the precursor; the sequence is MAKVPDLFED…DTEEEIIKPR (112 aa). An N6-acetyllysine modification is found at K82. The segment at 82-86 is nuclear localization signal (NLS); sequence KKRRL. Residue S87 is modified to Phosphoserine. 2 N-linked (GlcNAc...) asparagine glycosylation sites follow: N102 and N141.

Belongs to the IL-1 family. In terms of assembly, monomer. Interacts with TMED10; the interaction mediates the translocation from the cytoplasm into the ERGIC (endoplasmic reticulum-Golgi intermediate compartment) and thereby secretion. Interacts with IL1R1. Interacts with S100A13; this interaction is the first step in the export of IL1A, followed by direct translocation of this complex across the plasma membrane. In terms of processing, acetylated within its nuclear localization sequence, which impacts subcellular localization. Proteolytic processed by CAPN1 in a calcium-dependent manner. Cleavage from 31 kDa precursor to 18 kDa biologically active molecules. Post-translationally, phosphorylated. Phosphorylation greatly enhances susceptibility to digestion and promotes the conversion of pre-IL1A alpha to the biologically active IL1A.

The protein localises to the nucleus. It is found in the cytoplasm. It localises to the secreted. Functionally, cytokine constitutively present intracellularly in nearly all resting non-hematopoietic cells that plays an important role in inflammation and bridges the innate and adaptive immune systems. After binding to its receptor IL1R1 together with its accessory protein IL1RAP, forms the high affinity interleukin-1 receptor complex. Signaling involves the recruitment of adapter molecules such as MYD88, IRAK1 or IRAK4. In turn, mediates the activation of NF-kappa-B and the three MAPK pathways p38, p42/p44 and JNK pathways. Within the cell, acts as an alarmin and cell death results in its liberation in the extracellular space after disruption of the cell membrane to induce inflammation and alert the host to injury or damage. In addition to its role as a danger signal, which occurs when the cytokine is passively released by cell necrosis, directly senses DNA damage and acts as signal for genotoxic stress without loss of cell integrity. This chain is Interleukin-1 alpha (IL1A), found in Lama glama (Llama).